The sequence spans 159 residues: Cyclic pyranopterin monophosphate synthase (159 aa).

Substrate is bound by residues 76 to 78 (LCH) and 114 to 115 (ME). D129 is a catalytic residue.

Belongs to the MoaC family. As to quaternary structure, homohexamer; trimer of dimers.

It catalyses the reaction (8S)-3',8-cyclo-7,8-dihydroguanosine 5'-triphosphate = cyclic pyranopterin phosphate + diphosphate. It functions in the pathway cofactor biosynthesis; molybdopterin biosynthesis. In terms of biological role, catalyzes the conversion of (8S)-3',8-cyclo-7,8-dihydroguanosine 5'-triphosphate to cyclic pyranopterin monophosphate (cPMP). This chain is Cyclic pyranopterin monophosphate synthase, found in Clostridium botulinum (strain Alaska E43 / Type E3).